The sequence spans 1925 residues: Methylcytosine dioxygenase tet3-A (1925 aa).

The CXXC-type zinc-finger motif lies at Ser62–Glu103. Positions 69, 72, 75, 81, 84, 87, 97, and 102 each coordinate Zn(2+). Disordered regions lie at residues Lys457 to Lys476, Lys630 to Phe685, Gly774 to Leu812, and Asp833 to His892. Over residues Ser465–Lys476 the composition is skewed to polar residues. Residues Lys665–Arg677 are compositionally biased toward basic residues. Low complexity predominate over residues Asp777–Ala797. Polar residues-rich tracts occupy residues Ala841–Gly856 and Pro883–His892. 5 residues coordinate Zn(2+): Cys982, Cys984, Cys1042, His1068, and Cys1070. Residue Arg1110 participates in 2-oxoglutarate binding. Zn(2+)-binding residues include Cys1120, Cys1122, Cys1138, Cys1147, and Cys1207. Cys1223 contributes to the 2-oxoglutarate binding site. Residue His1229 coordinates Zn(2+). Fe cation-binding residues include His1231 and Asp1233. His1265 serves as a coordination point for 2-oxoglutarate. Disordered stretches follow at residues Ser1307–Pro1364, Leu1474–Asn1513, Ser1556–Asp1600, and Asn1722–Ile1769. Over residues Arg1316 to Asp1347 the composition is skewed to basic and acidic residues. Positions Met1350–Lys1363 are enriched in polar residues. The segment covering Ser1490–His1499 has biased composition (basic and acidic residues). 3 stretches are compositionally biased toward polar residues: residues Ser1502 to Asn1513, Ser1556 to Asp1572, and Val1730 to His1742. Residue His1804 participates in Fe cation binding. 2-oxoglutarate is bound at residue Arg1819–Ser1821. Positions Leu1837–Leu1870 form a coiled coil.

The protein belongs to the TET family. The cofactor is Fe(2+). Zn(2+) serves as cofactor. In terms of tissue distribution, detected in embryo (at protein level). Detected in embryonic head, in developing brain, neural tube and eye.

The protein localises to the nucleus. The protein resides in the chromosome. It carries out the reaction a 5-methyl-2'-deoxycytidine in DNA + 2-oxoglutarate + O2 = a 5-hydroxymethyl-2'-deoxycytidine in DNA + succinate + CO2. The catalysed reaction is a 5-hydroxymethyl-2'-deoxycytidine in DNA + 2-oxoglutarate + O2 = a 5-formyl-2'-deoxycytidine in DNA + succinate + CO2 + H2O. It catalyses the reaction a 5-formyl-2'-deoxycytidine in DNA + 2-oxoglutarate + O2 = a 5-carboxyl-2'-deoxycytidine in DNA + succinate + CO2 + H(+). In terms of biological role, dioxygenase that catalyzes the conversion of the modified genomic base 5-methylcytosine (5mC) into 5-hydroxymethylcytosine (5hmC) and plays a key role in epigenetic chromatin reprogramming during embryonic development. Conversion of 5mC into 5hmC probably constitutes the first step in cytosine demethylation. Selectively binds to the promoter region of target genes and contributes to regulate the expression of numerous developmental genes, including pax6, rax, sox9 and six3. May also contribute to the regulation of target genes in ways that do not require its enzyme activity. The polypeptide is Methylcytosine dioxygenase tet3-A (Xenopus laevis (African clawed frog)).